Here is a 376-residue protein sequence, read N- to C-terminus: MQWASILLLRGLCSLSQGQYEEDSHWWLQYLRNQQSTYYDPYDTYPYETSDPYPYEVEEGPAYAYGAPPPPEPRDCPQECDCPPNFPTAMYCDNRNLKYLPFVPSRMKYVYFQNNQIAAIQEGVFDNATGLLWIALHGNQITSDKIGRKVFSKLRHLERLYLDHNNLTRMPGPLPRSLRELHLDHNQISRVPNNALEGLENLTALYLHHNEIQEVGSSMRGLRSLILLDLSYNHLRRVPDGLPSALEQLYLEHNNVYTVPDSYFRGSPKLLYVRLSHNSLTNNGLATNTFNSSSLLELDLSYNQLQKIPPVNTNLENLYLQGNRINEFSISSFCTVVDVMNFSKLQVLRLDGNEIKRSAMPVDAPLCLRLASLIEI.

Positions 1-18 are cleaved as a signal peptide; it reads MQWASILLLRGLCSLSQG. A Pyrrolidone carboxylic acid modification is found at Q19. Residues Y20, Y38, Y53, Y55, Y63, and Y65 each carry the sulfotyrosine modification. The LRRNT domain occupies 67 to 105; the sequence is APPPPEPRDCPQECDCPPNFPTAMYCDNRNLKYLPFVPS. LRR repeat units follow at residues 106–127, 130–143, 156–176, 177–198, 201–222, 224–245, 246–266, and 269–289; these read RMKY…VFDN, GLLW…QITS, HLER…PLPR, SLRE…ALEG, NLTA…MRGL, SLIL…LPSA, LEQL…YFRG, and KLLY…ATNT. Residue N127 is glycosylated (N-linked (GlcNAc...) (keratan sulfate) asparagine). A glycan (N-linked (GlcNAc...) (keratan sulfate) asparagine) is linked at N166. N-linked (GlcNAc...) (keratan sulfate) asparagine glycosylation occurs at N201. N291 carries an N-linked (GlcNAc...) (keratan sulfate) asparagine glycan. LRR repeat units lie at residues 294–315 and 316–335; these read SLLE…NTNL and ENLY…SFCT. Residues C334 and C367 are joined by a disulfide bond. The N-linked (GlcNAc...) asparagine glycan is linked to N341. One copy of the LRR 11 repeat lies at 344-367; it reads KLQVLRLDGNEIKRSAMPVDAPLC.

It belongs to the small leucine-rich proteoglycan (SLRP) family. SLRP class II subfamily. In terms of assembly, binds to type I and type II collagen. In terms of processing, binds keratan sulfate chains.

The protein localises to the secreted. It localises to the extracellular space. The protein resides in the extracellular matrix. Affects the rate of fibrils formation. May have a primary role in collagen fibrillogenesis. This Rattus norvegicus (Rat) protein is Fibromodulin (Fmod).